Here is a 70-residue protein sequence, read N- to C-terminus: Small ribosomal subunit protein bS21 (70 aa).

This sequence belongs to the bacterial ribosomal protein bS21 family.

The polypeptide is Small ribosomal subunit protein bS21 (Sulfurovum sp. (strain NBC37-1)).